The chain runs to 548 residues: Glucose-6-phosphate isomerase (548 aa).

Glu359 serves as the catalytic Proton donor. Residues His390 and Lys510 contribute to the active site.

Belongs to the GPI family.

It localises to the cytoplasm. It catalyses the reaction alpha-D-glucose 6-phosphate = beta-D-fructose 6-phosphate. It functions in the pathway carbohydrate biosynthesis; gluconeogenesis. Its pathway is carbohydrate degradation; glycolysis; D-glyceraldehyde 3-phosphate and glycerone phosphate from D-glucose: step 2/4. Catalyzes the reversible isomerization of glucose-6-phosphate to fructose-6-phosphate. This is Glucose-6-phosphate isomerase from Gloeobacter violaceus (strain ATCC 29082 / PCC 7421).